Consider the following 163-residue polypeptide: MNLEQLINVLGLLVWIAARAVSRVGPHGSGLVYRELHDFYGYLQLDLLGPVVAGNRSVRTWREQADRARGTFAWRSGLNTSRILPVGSMYRGSDALPAGLYRPEEEVFLLLNRCHGPLSTPKNACLAEVGVANATFLSRFNVGDFHGASWENGTAPDGEPGVC.

The N-terminal stretch at 1-22 (MNLEQLINVLGLLVWIAARAVS) is a signal peptide.

This sequence belongs to the HHV-5 US34 protein family.

The polypeptide is Protein US34 (US34) (Homo sapiens (Human)).